We begin with the raw amino-acid sequence, 604 residues long: Rhotekin-2 (604 aa).

Residues 1–74 enclose the REM-1 domain; it reads MEGQLLRGLA…LQKSKEEIAN (74 aa). Residues 53-79 are a coiled coil; the sequence is VCSARIQAYTAELQKSKEEIANQTGAR. The region spanning 281–387 is the PH domain; the sequence is ADAFAGFLNE…WMGAFRQHFF (107 aa). The disordered stretch occupies residues 481–590; it reads LSPIGEPAPD…PVPVPRQKSI (110 aa). A compositionally biased stretch (polar residues) spans 514–527; it reads GRANQSKDSATQAG. Residues 529–543 show a composition bias toward low complexity; sequence SGASSSPSDPRLSPP.

Its function is as follows. May play an important role in lymphopoiesis. This chain is Rhotekin-2 (Rtkn2), found in Mus musculus (Mouse).